Reading from the N-terminus, the 461-residue chain is tRNA modification GTPase MnmE (461 aa).

Residues Arg-27, Glu-89, and Arg-128 each coordinate (6S)-5-formyl-5,6,7,8-tetrahydrofolate. In terms of domain architecture, TrmE-type G spans 224-382 (GLATAIVGRP…LENAIEQLFF (159 aa)). Residue Asn-234 participates in K(+) binding. Residues 234 to 239 (NVGKSS), 253 to 259 (TDIAGTT), and 278 to 281 (DTAG) each bind GTP. A Mg(2+)-binding site is contributed by Ser-238. Thr-253, Ile-255, and Thr-258 together coordinate K(+). A Mg(2+)-binding site is contributed by Thr-259. A (6S)-5-formyl-5,6,7,8-tetrahydrofolate-binding site is contributed by Lys-461.

It belongs to the TRAFAC class TrmE-Era-EngA-EngB-Septin-like GTPase superfamily. TrmE GTPase family. As to quaternary structure, homodimer. Heterotetramer of two MnmE and two MnmG subunits. The cofactor is K(+).

The protein localises to the cytoplasm. In terms of biological role, exhibits a very high intrinsic GTPase hydrolysis rate. Involved in the addition of a carboxymethylaminomethyl (cmnm) group at the wobble position (U34) of certain tRNAs, forming tRNA-cmnm(5)s(2)U34. The chain is tRNA modification GTPase MnmE from Lactobacillus johnsonii (strain CNCM I-12250 / La1 / NCC 533).